We begin with the raw amino-acid sequence, 1054 residues long: DIS3-like exonuclease 1 (1054 aa).

The CSD1 domain maps to 236–309 (AGIKSGRYIQ…PKNEWKGRTV (74 aa)). One can recognise a CSD2 domain in the interval 365–431 (ILVTPWDYRI…GEIATILVEN (67 aa)). The region spanning 465–816 (RKDLRKSHLV…VHRLLMAAIS (352 aa)) is the RNB domain. The residue at position 989 (serine 989) is a Phosphoserine.

The protein belongs to the RNR ribonuclease family. As to quaternary structure, component of the RNA exosome complex. The catalytically inactive RNA exosome core (Exo-9) complex is believed to associate with catalytic subunits EXOSC10, and DIS3 or DIS3L in cytoplasmic- and nuclear-specific RNA exosome complex forms. It depends on Mg(2+) as a cofactor.

The protein localises to the cytoplasm. The catalysed reaction is Exonucleolytic cleavage in the 3'- to 5'-direction to yield nucleoside 5'-phosphates.. Catalytic component of the RNA exosome complex which has 3'-&gt;5' exoribonuclease activity and participates in a multitude of cellular RNA processing and degradation events. In the cytoplasm, the RNA exosome complex is involved in general mRNA turnover and specifically degrades inherently unstable mRNAs containing AU-rich elements (AREs) within their 3' untranslated regions, and in RNA surveillance pathways, preventing translation of aberrant mRNAs. It seems to be involved in degradation of histone mRNA. This Homo sapiens (Human) protein is DIS3-like exonuclease 1 (DIS3L).